The following is a 160-amino-acid chain: Cytochrome b6-f complex subunit 4 (160 aa).

Helical transmembrane passes span 36-56, 95-115, and 131-151; these read LLYI…GLAV, LLGI…PFIE, and SLFL…CLPI.

Belongs to the cytochrome b family. PetD subfamily. The 4 large subunits of the cytochrome b6-f complex are cytochrome b6, subunit IV (17 kDa polypeptide, PetD), cytochrome f and the Rieske protein, while the 4 small subunits are PetG, PetL, PetM and PetN. The complex functions as a dimer.

Its subcellular location is the cellular thylakoid membrane. In terms of biological role, component of the cytochrome b6-f complex, which mediates electron transfer between photosystem II (PSII) and photosystem I (PSI), cyclic electron flow around PSI, and state transitions. This Prochlorococcus marinus (strain NATL2A) protein is Cytochrome b6-f complex subunit 4.